We begin with the raw amino-acid sequence, 231 residues long: 5'-methylthioadenosine/S-adenosylhomocysteine nucleosidase (231 aa).

Residue Glu12 is the Proton acceptor of the active site. Residues Gly78, Ile153, and 174–175 each bind substrate; that span reads ME. Asp198 acts as the Proton donor in catalysis.

Belongs to the PNP/UDP phosphorylase family. MtnN subfamily.

It carries out the reaction S-adenosyl-L-homocysteine + H2O = S-(5-deoxy-D-ribos-5-yl)-L-homocysteine + adenine. The enzyme catalyses S-methyl-5'-thioadenosine + H2O = 5-(methylsulfanyl)-D-ribose + adenine. It catalyses the reaction 5'-deoxyadenosine + H2O = 5-deoxy-D-ribose + adenine. The protein operates within amino-acid biosynthesis; L-methionine biosynthesis via salvage pathway; S-methyl-5-thio-alpha-D-ribose 1-phosphate from S-methyl-5'-thioadenosine (hydrolase route): step 1/2. Its function is as follows. Catalyzes the irreversible cleavage of the glycosidic bond in both 5'-methylthioadenosine (MTA) and S-adenosylhomocysteine (SAH/AdoHcy) to adenine and the corresponding thioribose, 5'-methylthioribose and S-ribosylhomocysteine, respectively. Also cleaves 5'-deoxyadenosine, a toxic by-product of radical S-adenosylmethionine (SAM) enzymes, into 5-deoxyribose and adenine. The protein is 5'-methylthioadenosine/S-adenosylhomocysteine nucleosidase of Shewanella putrefaciens (strain CN-32 / ATCC BAA-453).